A 368-amino-acid chain; its full sequence is Aminomethyltransferase (368 aa).

The protein belongs to the GcvT family. In terms of assembly, the glycine cleavage system is composed of four proteins: P, T, L and H.

The enzyme catalyses N(6)-[(R)-S(8)-aminomethyldihydrolipoyl]-L-lysyl-[protein] + (6S)-5,6,7,8-tetrahydrofolate = N(6)-[(R)-dihydrolipoyl]-L-lysyl-[protein] + (6R)-5,10-methylene-5,6,7,8-tetrahydrofolate + NH4(+). Functionally, the glycine cleavage system catalyzes the degradation of glycine. In Xylella fastidiosa (strain M12), this protein is Aminomethyltransferase.